Here is a 66-residue protein sequence, read N- to C-terminus: Large ribosomal subunit protein bL31 (66 aa).

4 residues coordinate Zn(2+): Cys-16, Cys-18, Cys-36, and Cys-39.

The protein belongs to the bacterial ribosomal protein bL31 family. Type A subfamily. As to quaternary structure, part of the 50S ribosomal subunit. The cofactor is Zn(2+).

Its function is as follows. Binds the 23S rRNA. This is Large ribosomal subunit protein bL31 from Campylobacter lari (strain RM2100 / D67 / ATCC BAA-1060).